The chain runs to 321 residues: Nucleotide-binding protein LI0459 (321 aa).

41–48 contributes to the ATP binding site; sequence GMSGAGKS.

The protein belongs to the RapZ-like family.

In terms of biological role, displays ATPase and GTPase activities. The protein is Nucleotide-binding protein LI0459 of Lawsonia intracellularis (strain PHE/MN1-00).